Here is a 428-residue protein sequence, read N- to C-terminus: Elongation factor 1-alpha (428 aa).

Positions 5–217 (KPHVNIVFIG…DQIPEPEKPV (213 aa)) constitute a tr-type G domain. Positions 14–21 (GHVDHGKS) are G1. 14–21 (GHVDHGKS) contacts GTP. Ser-21 contacts Mg(2+). The interval 68-72 (GITID) is G2. A G3 region spans residues 89 to 92 (DAPG). GTP-binding positions include 89-93 (DAPGH) and 144-147 (NKMD). Residues 144 to 147 (NKMD) form a G4 region. The interval 181-183 (SAW) is G5.

This sequence belongs to the TRAFAC class translation factor GTPase superfamily. Classic translation factor GTPase family. EF-Tu/EF-1A subfamily.

It localises to the cytoplasm. The enzyme catalyses GTP + H2O = GDP + phosphate + H(+). In terms of biological role, GTP hydrolase that promotes the GTP-dependent binding of aminoacyl-tRNA to the A-site of ribosomes during protein biosynthesis. The sequence is that of Elongation factor 1-alpha from Pyrococcus abyssi (strain GE5 / Orsay).